The primary structure comprises 310 residues: Putative S-adenosyl-L-methionine-dependent methyltransferase MMAR_0357 (310 aa).

S-adenosyl-L-methionine contacts are provided by residues aspartate 132 and 161–162 (DL).

Belongs to the UPF0677 family.

Functionally, exhibits S-adenosyl-L-methionine-dependent methyltransferase activity. This Mycobacterium marinum (strain ATCC BAA-535 / M) protein is Putative S-adenosyl-L-methionine-dependent methyltransferase MMAR_0357.